Consider the following 555-residue polypeptide: Potassium-transporting ATPase potassium-binding subunit (555 aa).

Transmembrane regions (helical) follow at residues 2-22 (IWVA…PTGI), 60-80 (QYAL…YFIF), 130-150 (IGIT…VMAF), 173-193 (VFLP…VPQT), 246-266 (MSNI…PFTY), 278-298 (ILFV…TTSE), 374-394 (AGFV…GLMV), 412-432 (LIAV…ALAL), 483-503 (LVMF…AASL), and 525-545 (GIFI…MLVL).

Belongs to the KdpA family. The system is composed of three essential subunits: KdpA, KdpB and KdpC.

The protein localises to the cell membrane. In terms of biological role, part of the high-affinity ATP-driven potassium transport (or Kdp) system, which catalyzes the hydrolysis of ATP coupled with the electrogenic transport of potassium into the cytoplasm. This subunit binds the extracellular potassium ions and delivers the ions to the membrane domain of KdpB through an intramembrane tunnel. The chain is Potassium-transporting ATPase potassium-binding subunit from Bacillus cereus (strain Q1).